A 1129-amino-acid chain; its full sequence is Ubiquitin carboxyl-terminal hydrolase 15 (1129 aa).

Residues 1-26 (MVLSNVDAEEVNMDSSMELEESSQEP) are disordered. The segment covering 7-23 (DAEEVNMDSSMELEESS) has biased composition (acidic residues). The MATH domain occupies 51–204 (HASYSWVVKN…NDEICISVTV (154 aa)). The USP domain occupies 230–545 (VGLKNQGATC…NAYMLVYFRK (316 aa)). The Nucleophile role is filled by C239. H481 acts as the Proton acceptor in catalysis.

Belongs to the peptidase C19 family.

Its subcellular location is the nucleus. The enzyme catalyses Thiol-dependent hydrolysis of ester, thioester, amide, peptide and isopeptide bonds formed by the C-terminal Gly of ubiquitin (a 76-residue protein attached to proteins as an intracellular targeting signal).. Hydrolase that deubiquitinates target proteins. Cleaves the UBL propeptide in sde2. Involved in regulating the steady-state levels of proteins including prp4. The protein is Ubiquitin carboxyl-terminal hydrolase 15 of Schizosaccharomyces pombe (strain 972 / ATCC 24843) (Fission yeast).